The sequence spans 103 residues: Cell division protein FtsB (103 aa).

The Cytoplasmic segment spans residues 1–3 (MGK). A helical membrane pass occupies residues 4–21 (LTLLLLAILVWLQYSLWF). The Periplasmic portion of the chain corresponds to 22–103 (GKNGIHDYTR…RAQSAGQNNR (82 aa)). The stretch at 31–71 (RVNDDVAAQQATNAKLKARNDQLFAEIDDLNGGQEALEERA) forms a coiled coil.

The protein belongs to the FtsB family. Part of a complex composed of FtsB, FtsL and FtsQ.

It localises to the cell inner membrane. In terms of biological role, essential cell division protein. May link together the upstream cell division proteins, which are predominantly cytoplasmic, with the downstream cell division proteins, which are predominantly periplasmic. The polypeptide is Cell division protein FtsB (Escherichia coli O157:H7).